The chain runs to 706 residues: DNA helicase/primase complex-associated protein (706 aa).

The tract at residues 203 to 249 (CPGGDGGEEGDGAEGGDGGVGGAGDGAGAGGGSSGKPPAGKRGRPTR) is disordered. Residues 217 to 236 (GGDGGVGGAGDGAGAGGGSS) are compositionally biased toward gly residues.

The protein belongs to the herpesviridae HEPA family. Associates with the primase and the helicase to form the helicase-primase complex. Interacts with the origin-binding protein. Interacts with the polymerase catalytic subunit.

It localises to the host nucleus. Its function is as follows. Component of the helicase/primase complex. Unwinds the DNA at the replication forks and generates single-stranded DNA for both leading and lagging strand synthesis. The primase synthesizes short RNA primers on the lagging strand that the polymerase presumably elongates using dNTPs. The primase-associated factor has no known catalytic activity in the complex and may serve to facilitate the formation of the replisome by directly interacting with the origin-binding protein and the polymerase. In Equus caballus (Horse), this protein is DNA helicase/primase complex-associated protein (40).